Consider the following 329-residue polypeptide: Beta-1,3-galactosyltransferase 6 (329 aa).

The Cytoplasmic portion of the chain corresponds to 1 to 11 (MKLLRRAWRRR). The chain crosses the membrane as a helical; Signal-anchor for type II membrane protein span at residues 12–34 (AALGLGTLALCGAALLYLARCAA). The Lumenal segment spans residues 35–329 (EPGDPRAMSG…QCCQRREGIP (295 aa)). N-linked (GlcNAc...) asparagine glycosylation occurs at Asn-131.

This sequence belongs to the glycosyltransferase 31 family. Mn(2+) is required as a cofactor. In terms of tissue distribution, ubiquitous.

The protein localises to the golgi apparatus. The protein resides in the golgi stack membrane. The enzyme catalyses 3-O-(beta-D-galactosyl-(1-&gt;4)-beta-D-xylosyl)-L-seryl-[protein] + UDP-alpha-D-galactose = 3-O-(beta-D-galactosyl-(1-&gt;3)-beta-D-galactosyl-(1-&gt;4)-beta-D-xylosyl)-L-seryl-[protein] + UDP + H(+). It participates in glycan metabolism; chondroitin sulfate biosynthesis. Its pathway is glycan metabolism; heparan sulfate biosynthesis. In terms of biological role, beta-1,3-galactosyltransferase that transfers galactose from UDP-galactose to substrates with a terminal beta-linked galactose residue. Has a preference for galactose-beta-1,4-xylose that is found in the linker region of glycosaminoglycans, such as heparan sulfate and chondroitin sulfate. Has no activity towards substrates with terminal glucosamine or galactosamine residues. The protein is Beta-1,3-galactosyltransferase 6 (B3GALT6) of Homo sapiens (Human).